A 267-amino-acid chain; its full sequence is Cilia- and flagella-associated protein 300 (267 aa).

This sequence belongs to the CFAP300 family. Interacts with DNAAF2. Expressed in the left-right organiser (LRO) node at 8.25 dpc.

Its subcellular location is the cytoplasm. The protein localises to the cytoskeleton. The protein resides in the cilium axoneme. In terms of biological role, cilium- and flagellum-specific protein that plays a role in axonemal structure organization and motility. May play a role in outer and inner dynein arm assembly. The chain is Cilia- and flagella-associated protein 300 from Mus musculus (Mouse).